A 316-amino-acid chain; its full sequence is Ribosomal protein L11 methyltransferase (316 aa).

The S-adenosyl-L-methionine site is built by Thr157, Gly178, Asp200, and Asn243.

Belongs to the methyltransferase superfamily. PrmA family.

The protein localises to the cytoplasm. The enzyme catalyses L-lysyl-[protein] + 3 S-adenosyl-L-methionine = N(6),N(6),N(6)-trimethyl-L-lysyl-[protein] + 3 S-adenosyl-L-homocysteine + 3 H(+). In terms of biological role, methylates ribosomal protein L11. This is Ribosomal protein L11 methyltransferase from Streptococcus pneumoniae serotype 2 (strain D39 / NCTC 7466).